A 436-amino-acid chain; its full sequence is 3-ketoacyl-CoA thiolase (436 aa).

Cysteine 99 (acyl-thioester intermediate) is an active-site residue. Active-site proton acceptor residues include histidine 392 and cysteine 422.

Belongs to the thiolase-like superfamily. Thiolase family. In terms of assembly, heterotetramer of two alpha chains (FadJ) and two beta chains (FadI).

It is found in the cytoplasm. It carries out the reaction an acyl-CoA + acetyl-CoA = a 3-oxoacyl-CoA + CoA. The protein operates within lipid metabolism; fatty acid beta-oxidation. Functionally, catalyzes the final step of fatty acid oxidation in which acetyl-CoA is released and the CoA ester of a fatty acid two carbons shorter is formed. This is 3-ketoacyl-CoA thiolase from Salmonella paratyphi A (strain ATCC 9150 / SARB42).